Consider the following 689-residue polypeptide: Glycine--tRNA ligase beta subunit (689 aa).

The protein belongs to the class-II aminoacyl-tRNA synthetase family. As to quaternary structure, tetramer of two alpha and two beta subunits.

The protein resides in the cytoplasm. It carries out the reaction tRNA(Gly) + glycine + ATP = glycyl-tRNA(Gly) + AMP + diphosphate. The protein is Glycine--tRNA ligase beta subunit of Aeromonas hydrophila subsp. hydrophila (strain ATCC 7966 / DSM 30187 / BCRC 13018 / CCUG 14551 / JCM 1027 / KCTC 2358 / NCIMB 9240 / NCTC 8049).